The primary structure comprises 194 residues: Putative manganese efflux pump MntP (194 aa).

The next 6 helical transmembrane spans lie at 3–23 (PITI…AAIG), 37–57 (LYVA…GWLL), 65–85 (IAAF…IHMI), 112–132 (LAAT…SLAF), 137–157 (IGIV…FGVM), and 170–190 (AEIV…YEHL).

It belongs to the MntP (TC 9.B.29) family.

It is found in the cell inner membrane. Probably functions as a manganese efflux pump. This is Putative manganese efflux pump MntP from Xylella fastidiosa (strain M12).